The sequence spans 127 residues: Fluoride-specific ion channel FluC (127 aa).

4 helical membrane passes run 4–24, 38–58, 71–91, and 104–124; these read FSILGFIALGGAIGACSRYLV, YGTLTVNVVGSFIMGLLIAAF, VIGLGFLGALTTFSTFSMDNV, and LNILLNVVLSISAAWIGFQLL. Residues Gly-78 and Thr-81 each contribute to the Na(+) site.

This sequence belongs to the fluoride channel Fluc/FEX (TC 1.A.43) family.

It localises to the cell inner membrane. It carries out the reaction fluoride(in) = fluoride(out). Its activity is regulated as follows. Na(+) is not transported, but it plays an essential structural role and its presence is essential for fluoride channel function. Fluoride-specific ion channel. Important for reducing fluoride concentration in the cell, thus reducing its toxicity. The polypeptide is Fluoride-specific ion channel FluC (Vibrio parahaemolyticus serotype O3:K6 (strain RIMD 2210633)).